The sequence spans 197 residues: Phosphoheptose isomerase (197 aa).

The SIS domain maps to 36–197 (MVNALLNEGK…IDRQLFGSEE (162 aa)). Position 51–53 (51–53 (NGG)) interacts with substrate. Residues His-60 and Glu-64 each contribute to the Zn(2+) site. Substrate-binding positions include Glu-64, 93-94 (ND), 119-121 (STS), Ser-124, and Gln-174. Positions 174 and 182 each coordinate Zn(2+).

It belongs to the SIS family. GmhA subfamily. As to quaternary structure, homotetramer. Zn(2+) serves as cofactor.

It localises to the cytoplasm. It carries out the reaction 2 D-sedoheptulose 7-phosphate = D-glycero-alpha-D-manno-heptose 7-phosphate + D-glycero-beta-D-manno-heptose 7-phosphate. Its pathway is carbohydrate biosynthesis; D-glycero-D-manno-heptose 7-phosphate biosynthesis; D-glycero-alpha-D-manno-heptose 7-phosphate and D-glycero-beta-D-manno-heptose 7-phosphate from sedoheptulose 7-phosphate: step 1/1. Its function is as follows. Catalyzes the isomerization of sedoheptulose 7-phosphate in D-glycero-D-manno-heptose 7-phosphate. The chain is Phosphoheptose isomerase from Pseudomonas aeruginosa (strain LESB58).